We begin with the raw amino-acid sequence, 313 residues long: GTP cyclohydrolase MptA (313 aa).

Belongs to the GTP cyclohydrolase IV family. Homodimer. Fe(2+) serves as cofactor.

The enzyme catalyses GTP + H2O = 7,8-dihydroneopterin 2',3'-cyclic phosphate + formate + diphosphate + H(+). It functions in the pathway cofactor biosynthesis; 5,6,7,8-tetrahydromethanopterin biosynthesis. Converts GTP to 7,8-dihydro-D-neopterin 2',3'-cyclic phosphate, the first intermediate in the biosynthesis of coenzyme methanopterin. The protein is GTP cyclohydrolase MptA of Methanoculleus marisnigri (strain ATCC 35101 / DSM 1498 / JR1).